The chain runs to 287 residues: Protease HtpX (287 aa).

2 consecutive transmembrane segments (helical) span residues 4–24 (IFLL…VMSI) and 33–53 (GGLL…SLAI). Histidine 139 serves as a coordination point for Zn(2+). Residue glutamate 140 is part of the active site. Histidine 143 is a Zn(2+) binding site. 2 consecutive transmembrane segments (helical) span residues 154 to 174 (LIQG…ASII) and 195 to 215 (AVVF…VAYF). Glutamate 220 is a Zn(2+) binding site.

This sequence belongs to the peptidase M48B family. Requires Zn(2+) as cofactor.

The protein resides in the cell inner membrane. In Shewanella loihica (strain ATCC BAA-1088 / PV-4), this protein is Protease HtpX.